The chain runs to 199 residues: Dephospho-CoA kinase (199 aa).

The DPCK domain occupies 3-199; it reads RIGLTGGIGS…HCKYLQIAQT (197 aa). An ATP-binding site is contributed by 11–16; it reads GSGKST.

The protein belongs to the CoaE family.

The protein resides in the cytoplasm. It carries out the reaction 3'-dephospho-CoA + ATP = ADP + CoA + H(+). Its pathway is cofactor biosynthesis; coenzyme A biosynthesis; CoA from (R)-pantothenate: step 5/5. In terms of biological role, catalyzes the phosphorylation of the 3'-hydroxyl group of dephosphocoenzyme A to form coenzyme A. The protein is Dephospho-CoA kinase of Coxiella burnetii (strain RSA 493 / Nine Mile phase I).